Consider the following 489-residue polypeptide: Ammonium transporter Rh type C (489 aa).

The Cytoplasmic portion of the chain corresponds to 1–21 (MGNCADCLRGFFCPPKNTNIR). The chain crosses the membrane as a helical span at residues 22-42 (ISLPAVCFVWQIAMIVLFGVF). Topologically, residues 43 to 75 (IRYDAESDIRLWLQLKHTNNITSDIENDFYFRY) are extracellular. Residue asparagine 62 is glycosylated (N-linked (GlcNAc...) asparagine). The chain crosses the membrane as a helical span at residues 76 to 96 (PSFQDVHVMIFVGFGFLMTFL). The Cytoplasmic portion of the chain corresponds to 97–100 (KRYS). The chain crosses the membrane as a helical span at residues 101 to 121 (FGGVGFNFLIGAFGLQWALLM). Over 122 to 140 (QGWFHALDPTTGKISIGVE) the chain is Extracellular. Residues 141–161 (GLINADFCVAASLIAYGALLG) form a helical membrane-spanning segment. Residues 162–169 (KVSPVQLM) lie on the Cytoplasmic side of the membrane. A helical transmembrane segment spans residues 170–190 (VVTLFGVTLFAVEEYIILNLL). The Extracellular segment spans residues 191–195 (HCRDA). A helical membrane pass occupies residues 196 to 216 (GGSMVIHCFGGYYGLTISWIL). At 217–235 (YRPKLHQSKRLNGSVYHSD) the chain is on the cytoplasmic side. A helical membrane pass occupies residues 236–256 (VFAMIGTLFLWMFWPSFNSAI). At 257 to 266 (TDHGSGQHRT) the chain is on the extracellular side. A helical transmembrane segment spans residues 267 to 287 (AINTYIALASSVLTTVAISSA). The Cytoplasmic segment spans residues 288-298 (SEKRGKLDMVH). A helical transmembrane segment spans residues 299-319 (IQNATLAGGVAMGTAAEFMIT). Proline 320 is a topological domain (extracellular). A helical membrane pass occupies residues 321-341 (YGALIVGFCTGIISTFGYLFV). At 342–359 (SPFMEKYLKIQDTCGVHN) the chain is on the cytoplasmic side. The helical transmembrane segment at 360–380 (LHAMPGMLGGFIGAIVAAAAT) threads the bilayer. Residues 381–412 (EEVYSREGLIETFDFEGKFADRTVGTQGGFQA) lie on the Extracellular side of the membrane. Residues 413–433 (AGVCVAIAFAVVGGAVVGLIL) form a helical membrane-spanning segment. The Cytoplasmic segment spans residues 434–489 (RLPIWGDPADDNCFDDEVYWEVPEDEEGILPVLEYNNHMTHKHQDISESNFSVEQS).

It belongs to the ammonium transporter (TC 2.A.49) family. Rh subfamily. As to quaternary structure, homotrimer.

It localises to the apical cell membrane. Functions as an ammonia transporter. May play a role in the elimination of ammonia in the gill. This chain is Ammonium transporter Rh type C (rhcg), found in Gasterosteus aculeatus (Three-spined stickleback).